The primary structure comprises 504 residues: Cobyric acid synthase (504 aa).

A GATase cobBQ-type domain is found at 258–454; it reads EIEIAIIKLP…LHGIFENDEW (197 aa). The active-site Nucleophile is the C339. H446 is a catalytic residue.

Belongs to the CobB/CobQ family. CobQ subfamily.

It participates in cofactor biosynthesis; adenosylcobalamin biosynthesis. Its function is as follows. Catalyzes amidations at positions B, D, E, and G on adenosylcobyrinic A,C-diamide. NH(2) groups are provided by glutamine, and one molecule of ATP is hydrogenolyzed for each amidation. The chain is Cobyric acid synthase from Prochlorococcus marinus (strain NATL2A).